Here is a 116-residue protein sequence, read N- to C-terminus: Methionine-R-sulfoxide reductase B1 (116 aa).

The MsrB domain occupies 1–106; the sequence is MSFCSFFGGE…FSSSLKFVPK (106 aa). Zn(2+) is bound by residues Cys-23, Cys-26, Cys-71, and Cys-74. The active-site Nucleophile is Sec-95. Sec-95 is a non-standard amino acid (selenocysteine).

This sequence belongs to the MsrB Met sulfoxide reductase family. Zn(2+) is required as a cofactor. Truncated MSRB1/SEPX1 proteins produced by failed UGA/Sec decoding are ubiquitinated by some Cul2-RING E3 ubiquitin-protein ligase complexes (containing either PRAME, PRAMF6, PRAMF9 or FEM1C as substrate-recognition component).

Its subcellular location is the cytoplasm. The protein localises to the nucleus. It localises to the cytoskeleton. It catalyses the reaction L-methionyl-[protein] + [thioredoxin]-disulfide + H2O = L-methionyl-(R)-S-oxide-[protein] + [thioredoxin]-dithiol. The enzyme catalyses [thioredoxin]-disulfide + L-methionine + H2O = L-methionine (R)-S-oxide + [thioredoxin]-dithiol. Functionally, methionine-sulfoxide reductase that specifically reduces methionine (R)-sulfoxide back to methionine. While in many cases, methionine oxidation is the result of random oxidation following oxidative stress, methionine oxidation is also a post-translational modification that takes place on specific residue. Acts as a regulator of actin assembly by reducing methionine (R)-sulfoxide mediated by MICALs (MICAL1, MICAL2 or MICAL3) on actin, thereby promoting filament repolymerization. Plays a role in innate immunity by reducing oxidized actin, leading to actin repolymerization in macrophages. The polypeptide is Methionine-R-sulfoxide reductase B1 (MSRB1) (Homo sapiens (Human)).